The primary structure comprises 96 residues: UPF0125 protein YfjF (96 aa).

This sequence belongs to the UPF0125 (RnfH) family.

The sequence is that of UPF0125 protein YfjF (yfjF) from Escherichia coli O157:H7.